The chain runs to 192 residues: Ribosome maturation factor RimM (192 aa).

Residues 116 to 192 (PGEYYWVDLI…RIIVDWQPDY (77 aa)) enclose the PRC barrel domain.

It belongs to the RimM family. In terms of assembly, binds ribosomal protein uS19.

It is found in the cytoplasm. In terms of biological role, an accessory protein needed during the final step in the assembly of 30S ribosomal subunit, possibly for assembly of the head region. Essential for efficient processing of 16S rRNA. May be needed both before and after RbfA during the maturation of 16S rRNA. It has affinity for free ribosomal 30S subunits but not for 70S ribosomes. This Verminephrobacter eiseniae (strain EF01-2) protein is Ribosome maturation factor RimM.